The primary structure comprises 173 residues: uncharacterized protein (173 aa).

Positions 1–15 are cleaved as a propeptide — leader sequence; that stretch reads MERKLSQRAGNTFKG. N-methylphenylalanine is present on Phe16. The chain crosses the membrane as a helical span at residues 16–37; it reads FTLVEVLITLAIISLVFSLILI.

The protein localises to the membrane. This is an uncharacterized protein from Aquifex aeolicus (strain VF5).